The following is a 514-amino-acid chain: Membrane-bound lytic murein transglycosylase F (514 aa).

The N-terminal stretch at 1-30 (MKKLKINYLFIGILTLLLAAALWPSIPWFG) is a signal peptide. Residues 31-269 (KTENHVAAIQ…RIEEKYLGHG (239 aa)) form a non-LT domain region. Residues 270 to 514 (DDFDYVDTRS…LFTPQKKEEK (245 aa)) are LT domain. Residue glutamate 314 is part of the active site.

In the N-terminal section; belongs to the bacterial solute-binding protein 3 family. It in the C-terminal section; belongs to the transglycosylase Slt family.

It localises to the cell outer membrane. It catalyses the reaction Exolytic cleavage of the (1-&gt;4)-beta-glycosidic linkage between N-acetylmuramic acid (MurNAc) and N-acetylglucosamine (GlcNAc) residues in peptidoglycan, from either the reducing or the non-reducing ends of the peptidoglycan chains, with concomitant formation of a 1,6-anhydrobond in the MurNAc residue.. In terms of biological role, murein-degrading enzyme that degrades murein glycan strands and insoluble, high-molecular weight murein sacculi, with the concomitant formation of a 1,6-anhydromuramoyl product. Lytic transglycosylases (LTs) play an integral role in the metabolism of the peptidoglycan (PG) sacculus. Their lytic action creates space within the PG sacculus to allow for its expansion as well as for the insertion of various structures such as secretion systems and flagella. This is Membrane-bound lytic murein transglycosylase F from Salmonella arizonae (strain ATCC BAA-731 / CDC346-86 / RSK2980).